Consider the following 208-residue polypeptide: Large ribosomal subunit protein uL3 (208 aa).

Residues 122 to 148 (KRHGQSRGPMAHGSRYHRRPGSMGPVA) are disordered.

The protein belongs to the universal ribosomal protein uL3 family. In terms of assembly, part of the 50S ribosomal subunit. Forms a cluster with proteins L14 and L19.

Functionally, one of the primary rRNA binding proteins, it binds directly near the 3'-end of the 23S rRNA, where it nucleates assembly of the 50S subunit. The protein is Large ribosomal subunit protein uL3 of Streptococcus pyogenes serotype M1.